The primary structure comprises 550 residues: Glucose-6-phosphate isomerase 1 (550 aa).

Glu355 acts as the Proton donor in catalysis. Catalysis depends on residues His386 and Lys512.

The protein belongs to the GPI family.

The protein localises to the cytoplasm. It catalyses the reaction alpha-D-glucose 6-phosphate = beta-D-fructose 6-phosphate. It participates in carbohydrate biosynthesis; gluconeogenesis. It functions in the pathway carbohydrate degradation; glycolysis; D-glyceraldehyde 3-phosphate and glycerone phosphate from D-glucose: step 2/4. Its function is as follows. Catalyzes the reversible isomerization of glucose-6-phosphate to fructose-6-phosphate. The chain is Glucose-6-phosphate isomerase 1 from Rhodococcus jostii (strain RHA1).